The primary structure comprises 212 residues: Large ribosomal subunit protein uL3 (212 aa).

Positions 136-155 (THGNSVSHRVLGSTGQNQTP) are disordered. Position 153 is an N5-methylglutamine (glutamine 153).

It belongs to the universal ribosomal protein uL3 family. Part of the 50S ribosomal subunit. Forms a cluster with proteins L14 and L19. In terms of processing, methylated by PrmB.

In terms of biological role, one of the primary rRNA binding proteins, it binds directly near the 3'-end of the 23S rRNA, where it nucleates assembly of the 50S subunit. This Acinetobacter baumannii (strain AB307-0294) protein is Large ribosomal subunit protein uL3.